Reading from the N-terminus, the 233-residue chain is Proteasome subunit alpha (233 aa).

The protein belongs to the peptidase T1A family. As to quaternary structure, the 20S proteasome core is composed of 14 alpha and 14 beta subunits that assemble into four stacked heptameric rings, resulting in a barrel-shaped structure. The two inner rings, each composed of seven catalytic beta subunits, are sandwiched by two outer rings, each composed of seven alpha subunits. The catalytic chamber with the active sites is on the inside of the barrel. Has a gated structure, the ends of the cylinder being occluded by the N-termini of the alpha-subunits. Is capped at one or both ends by the proteasome regulatory ATPase, PAN. Post-translationally, the N-terminus is blocked.

Its subcellular location is the cytoplasm. With respect to regulation, the formation of the proteasomal ATPase PAN-20S proteasome complex, via the docking of the C-termini of PAN into the intersubunit pockets in the alpha-rings, triggers opening of the gate for substrate entry. Interconversion between the open-gate and close-gate conformations leads to a dynamic regulation of the 20S proteasome proteolysis activity. Functionally, component of the proteasome core, a large protease complex with broad specificity involved in protein degradation. The T.acidophilum proteasome is able to cleave oligopeptides after Tyr, Leu, Phe, and to a lesser extent after Glu and Arg. Thus, displays chymotrypsin-like activity and low level of caspase-like and trypsin-like activities. The sequence is that of Proteasome subunit alpha from Thermoplasma acidophilum (strain ATCC 25905 / DSM 1728 / JCM 9062 / NBRC 15155 / AMRC-C165).